Consider the following 394-residue polypeptide: 1-deoxy-D-xylulose 5-phosphate reductoisomerase (394 aa).

The NADPH site is built by Thr12, Gly13, Ser14, Ile15, Lys39, Gln40, and Asn126. 1-deoxy-D-xylulose 5-phosphate is bound at residue Lys127. Glu128 is a binding site for NADPH. Asp152 contacts Mn(2+). 4 residues coordinate 1-deoxy-D-xylulose 5-phosphate: Ser153, Glu154, Ser183, and His206. Residue Glu154 coordinates Mn(2+). Gly212 contacts NADPH. Positions 219, 224, 225, and 228 each coordinate 1-deoxy-D-xylulose 5-phosphate. Glu228 provides a ligand contact to Mn(2+).

Belongs to the DXR family. It depends on Mg(2+) as a cofactor. Mn(2+) serves as cofactor.

The enzyme catalyses 2-C-methyl-D-erythritol 4-phosphate + NADP(+) = 1-deoxy-D-xylulose 5-phosphate + NADPH + H(+). It functions in the pathway isoprenoid biosynthesis; isopentenyl diphosphate biosynthesis via DXP pathway; isopentenyl diphosphate from 1-deoxy-D-xylulose 5-phosphate: step 1/6. Catalyzes the NADPH-dependent rearrangement and reduction of 1-deoxy-D-xylulose-5-phosphate (DXP) to 2-C-methyl-D-erythritol 4-phosphate (MEP). The sequence is that of 1-deoxy-D-xylulose 5-phosphate reductoisomerase from Neisseria meningitidis serogroup A / serotype 4A (strain DSM 15465 / Z2491).